Consider the following 385-residue polypeptide: Cytochrome b (385 aa).

4 helical membrane-spanning segments follow: residues 32–52 (FGSL…TLAM), 76–98 (WLVR…LHIG), 113–133 (TWAI…LGYV), and 179–199 (FFAL…MHLI). Positions 82 and 96 each coordinate heme b. Heme b contacts are provided by His183 and His197. Position 202 (His202) interacts with a ubiquinone. 4 helical membrane passes run 226-246 (FVFK…IFVF), 290-310 (LLGV…PITD), 322-342 (LSKV…QIGA), and 349-369 (FIEF…VIVP).

It belongs to the cytochrome b family. As to quaternary structure, fungal cytochrome b-c1 complex contains 10 subunits; 3 respiratory subunits, 2 core proteins and 5 low-molecular weight proteins. Cytochrome b-c1 complex is a homodimer. It depends on heme b as a cofactor.

The protein resides in the mitochondrion inner membrane. In terms of biological role, component of the ubiquinol-cytochrome c reductase complex (complex III or cytochrome b-c1 complex) that is part of the mitochondrial respiratory chain. The b-c1 complex mediates electron transfer from ubiquinol to cytochrome c. Contributes to the generation of a proton gradient across the mitochondrial membrane that is then used for ATP synthesis. The polypeptide is Cytochrome b (cob) (Aspergillus terreus (strain NIH 2624 / FGSC A1156)).